The primary structure comprises 64 residues: Large ribosomal subunit protein bL32 (64 aa).

The protein belongs to the bacterial ribosomal protein bL32 family.

The protein is Large ribosomal subunit protein bL32 of Flavobacterium johnsoniae (strain ATCC 17061 / DSM 2064 / JCM 8514 / BCRC 14874 / CCUG 350202 / NBRC 14942 / NCIMB 11054 / UW101) (Cytophaga johnsonae).